Reading from the N-terminus, the 261-residue chain is tRNA pseudouridine synthase A (261 aa).

Aspartate 51 functions as the Nucleophile in the catalytic mechanism. Tyrosine 109 is a binding site for substrate.

It belongs to the tRNA pseudouridine synthase TruA family. Homodimer.

The enzyme catalyses uridine(38/39/40) in tRNA = pseudouridine(38/39/40) in tRNA. Functionally, formation of pseudouridine at positions 38, 39 and 40 in the anticodon stem and loop of transfer RNAs. The chain is tRNA pseudouridine synthase A from Psychromonas ingrahamii (strain DSM 17664 / CCUG 51855 / 37).